The following is a 306-amino-acid chain: Shugoshin (306 aa).

Residues 28–75 (NFKSTNESLIKKNLQLKQQLSQCTKALEKLRNENIALREQNQELIDAT) adopt a coiled-coil conformation. Disordered stretches follow at residues 122-196 (PEPS…GRRS) and 223-306 (IAPS…DTFF). A compositionally biased stretch (basic and acidic residues) spans 133-161 (PKMECNLEKLDESPVRNFPRSDYEEENKS). The span at 167 to 181 (NGPSSSSSMTQNLEN) shows a compositional bias: polar residues. Residues 230-241 (GGPPKKAPPRKA) are compositionally biased toward pro residues.

It belongs to the shugoshin family.

The protein resides in the nucleus. Its subcellular location is the chromosome. It is found in the centromere. Functionally, plays a central role in chromosome cohesion during cell division by preventing premature dissociation of cohesin complex from centromeres after prophase, when most of cohesin complex dissociates from chromosomes arms. The sequence is that of Shugoshin (sgo-1) from Caenorhabditis briggsae.